We begin with the raw amino-acid sequence, 79 residues long: MORN repeat-containing protein 2 (79 aa).

MORN repeat units lie at residues 15–36 (YEGQ…PNGA) and 38–55 (YTGN…EYTD).

The protein resides in the cytoplasmic vesicle. The protein localises to the secretory vesicle. It localises to the acrosome. Its subcellular location is the nucleus. Might have a role in spermatogenesis. In Homo sapiens (Human), this protein is MORN repeat-containing protein 2.